Consider the following 862-residue polypeptide: Putative PIP5K1A and PSMD4-like protein (862 aa).

The 369-residue stretch at 28–396 (TSSALKGAIQ…WFQRFMCNTV (369 aa)) folds into the PIPK domain. Disordered stretches follow at residues 404–424 (PSPS…GSSG) and 453–481 (HLGC…PSFS). A compositionally biased stretch (low complexity) spans 412 to 424 (SGSSFSQRAGSSG). The region spanning 490 to 673 (MLTTSVDNSE…LADALISFPI (184 aa)) is the VWFA domain. Positions 696–715 (SADPELALVLRVFMEEQRQR) constitute a UIM 1 domain. Residues 716-740 (QEEEARQAAAASAAEAGIATTGTED) are disordered. Residues 722-731 (QAAAASAAEA) are compositionally biased toward low complexity. The UIM 2 domain occupies 766–783 (MTEEEKIVCAMQMSLQGA). Residues 826–862 (NLPGVDPNNEAIRNAVGSLASQATKDSKKDKKEEDKK) form a disordered region. The span at 850–862 (KDSKKDKKEEDKK) shows a compositional bias: basic and acidic residues.

As to expression, testis-specific.

The protein resides in the cytoplasm. Has negligible PIP5 kinase activity. Binds to ubiquitinated proteins. The chain is Putative PIP5K1A and PSMD4-like protein (PIPSL) from Homo sapiens (Human).